Here is a 426-residue protein sequence, read N- to C-terminus: Glutamyl-tRNA reductase (426 aa).

Substrate is bound by residues 51–54, serine 110, 115–117, and glutamine 121; these read TCNR and EAQ. Cysteine 52 acts as the Nucleophile in catalysis. 190–195 contacts NADP(+); the sequence is GAGEMA.

It belongs to the glutamyl-tRNA reductase family. As to quaternary structure, homodimer.

It carries out the reaction (S)-4-amino-5-oxopentanoate + tRNA(Glu) + NADP(+) = L-glutamyl-tRNA(Glu) + NADPH + H(+). It participates in porphyrin-containing compound metabolism; protoporphyrin-IX biosynthesis; 5-aminolevulinate from L-glutamyl-tRNA(Glu): step 1/2. Its function is as follows. Catalyzes the NADPH-dependent reduction of glutamyl-tRNA(Glu) to glutamate 1-semialdehyde (GSA). This chain is Glutamyl-tRNA reductase, found in Desulfotalea psychrophila (strain LSv54 / DSM 12343).